The following is a 287-amino-acid chain: Protease HtpX (287 aa).

2 helical membrane passes run 4 to 24 (VFLL…VMSI) and 33 to 53 (GGLL…SLAI). His139 is a Zn(2+) binding site. Glu140 is an active-site residue. His143 is a binding site for Zn(2+). The next 2 helical transmembrane spans lie at 154 to 174 (LIQG…AGII) and 195 to 215 (GVVF…VAYF). Position 220 (Glu220) interacts with Zn(2+).

The protein belongs to the peptidase M48B family. It depends on Zn(2+) as a cofactor.

The protein resides in the cell inner membrane. This Shewanella denitrificans (strain OS217 / ATCC BAA-1090 / DSM 15013) protein is Protease HtpX.